Reading from the N-terminus, the 576-residue chain is Mycobactin import ATP-binding/permease protein IrtB (576 aa).

Residues 1 to 25 (MIRTLIALVPADKRGTLGLYTVLTV) lie on the Cytoplasmic side of the membrane. The 281-residue stretch at 19–299 (LYTVLTVLSV…LSELTPAIES (281 aa)) folds into the ABC transmembrane type-1 domain. Residues 26–46 (LSVVIRAAGTVLLVPLVAALF) form a helical membrane-spanning segment. Residues 47-52 (GDTPQD) are Periplasmic-facing. The helical transmembrane segment at 53–73 (AWPWLGWLTAATAAGWIVDTT) threads the bilayer. Topologically, residues 74–131 (TSRLGFDLGFAVLDHTQHDVADRMPNIRLDWLTAENTATARAAIASTGPELVGLVVNL) are cytoplasmic. Helical transmembrane passes span 132 to 152 (LTPLIGAVLLPAAIAVALVAV) and 153 to 173 (SPPLGLAALAGVVVLLGAMWA). The Cytoplasmic segment spans residues 174-241 (SNRLSRKADT…RLLAMQIPGQ (68 aa)). A helical transmembrane segment spans residues 242-262 (LLFSLASQLALILLAGMATWL). At 263–267 (TVRGE) the chain is on the periplasmic side. A helical transmembrane segment spans residues 268–288 (LSVPEAVAMIVVVARYLEPFT). The Cytoplasmic segment spans residues 289–576 (SLSELTPAIE…HEAADWQITH (288 aa)). An ABC transporter domain is found at 332–565 (IEFDCVTFGY…GGRFDEFWRR (234 aa)). Position 364 to 371 (364 to 371 (GPSGSGKS)) interacts with ATP.

Belongs to the ABC transporter superfamily. Siderophore-Fe(3+) uptake transporter (SIUT) (TC 3.A.1.21) family. In terms of assembly, forms a heterodimer with IrtA.

It localises to the cell inner membrane. In terms of biological role, part of the ABC transporter complex IrtAB involved in the import of iron-bound mycobactin (Fe-MBT) and carboxymycobactin (Fe-cMBT). Has a preference for Fe-MBT over Fe-cMBT. Transmembrane domains (TMD) form a pore in the membrane and the ATP-binding domain (NBD) is responsible for energy generation. This is Mycobactin import ATP-binding/permease protein IrtB from Mycolicibacterium smegmatis (strain ATCC 700084 / mc(2)155) (Mycobacterium smegmatis).